The following is a 105-amino-acid chain: Transcriptional regulator SutA (105 aa).

Residues 1-37 show a composition bias toward acidic residues; it reads MSEEELEQDELDGADEDDGEELAAADDGEADSSDGDE. Residues 1-105 are disordered; it reads MSEEELEQDE…PDSKYGSRPI (105 aa). Basic and acidic residues-rich tracts occupy residues 59–83 and 92–105; these read AKQK…KVQE and PPKK…SRPI.

Interacts with RNA polymerase.

In terms of biological role, causes widespread changes in gene expression, and plays a direct role in the regulation of genes encoding ribosomal components. Associates with chromosomal DNA through interaction with RNA polymerase. Contributes to biofilm formation and secondary metabolite production. Important during transitions to and from the survival state. This Pseudomonas aeruginosa (strain UCBPP-PA14) protein is Transcriptional regulator SutA.